A 273-amino-acid polypeptide reads, in one-letter code: 4-hydroxy-tetrahydrodipicolinate reductase (273 aa).

NAD(+) is bound at residue 12–17; it reads GAGGRM. Arg-39 contacts NADP(+). Residues 102-104 and 126-129 each bind NAD(+); these read GTT and AANF. His-159 acts as the Proton donor/acceptor in catalysis. His-160 serves as a coordination point for (S)-2,3,4,5-tetrahydrodipicolinate. Lys-163 serves as the catalytic Proton donor. 169–170 contacts (S)-2,3,4,5-tetrahydrodipicolinate; sequence GT.

Belongs to the DapB family. Homotetramer.

It localises to the cytoplasm. The catalysed reaction is (S)-2,3,4,5-tetrahydrodipicolinate + NAD(+) + H2O = (2S,4S)-4-hydroxy-2,3,4,5-tetrahydrodipicolinate + NADH + H(+). It carries out the reaction (S)-2,3,4,5-tetrahydrodipicolinate + NADP(+) + H2O = (2S,4S)-4-hydroxy-2,3,4,5-tetrahydrodipicolinate + NADPH + H(+). It participates in amino-acid biosynthesis; L-lysine biosynthesis via DAP pathway; (S)-tetrahydrodipicolinate from L-aspartate: step 4/4. Catalyzes the conversion of 4-hydroxy-tetrahydrodipicolinate (HTPA) to tetrahydrodipicolinate. This is 4-hydroxy-tetrahydrodipicolinate reductase from Sodalis glossinidius (strain morsitans).